Reading from the N-terminus, the 154-residue chain is Ribonuclease 8 (154 aa).

An N-terminal signal peptide occupies residues 1–27; it reads MAPARAGCCALLLLLLGLWVAEIPVSA. The Proton acceptor role is filled by His-42. 3 disulfide bridges follow: Cys-64–Cys-118, Cys-82–Cys-133, and Cys-89–Cys-96. Substrate-binding positions include 65–69 and Lys-90; that span reads KDLNT. The active-site Proton donor is His-149.

It belongs to the pancreatic ribonuclease family.

The protein localises to the secreted. Functionally, has a low ribonuclease activity. The protein is Ribonuclease 8 (RNASE8) of Pongo pygmaeus (Bornean orangutan).